A 353-amino-acid polypeptide reads, in one-letter code: UDP-3-O-acylglucosamine N-acyltransferase (353 aa).

Histidine 258 functions as the Proton acceptor in the catalytic mechanism.

It belongs to the transferase hexapeptide repeat family. LpxD subfamily. In terms of assembly, homotrimer.

It catalyses the reaction a UDP-3-O-[(3R)-3-hydroxyacyl]-alpha-D-glucosamine + a (3R)-hydroxyacyl-[ACP] = a UDP-2-N,3-O-bis[(3R)-3-hydroxyacyl]-alpha-D-glucosamine + holo-[ACP] + H(+). It participates in bacterial outer membrane biogenesis; LPS lipid A biosynthesis. Catalyzes the N-acylation of UDP-3-O-acylglucosamine using 3-hydroxyacyl-ACP as the acyl donor. Is involved in the biosynthesis of lipid A, a phosphorylated glycolipid that anchors the lipopolysaccharide to the outer membrane of the cell. The sequence is that of UDP-3-O-acylglucosamine N-acyltransferase from Parvibaculum lavamentivorans (strain DS-1 / DSM 13023 / NCIMB 13966).